The chain runs to 406 residues: YQGVYPVKSNQDRFVVEDIVKFGSSFRFGLEAGSKPELLLAMSCLCKGNPEALLVCNGFKDAEYISLALLARKLALKHVIVLEQEEEVDMVIDISQKLSVRPVIGVRAKLRTKHSGHFGSTSGEKGKFGLTTTQVLRVVKKLQDSGMLDCLQLLHFHIGSQIPSTALLSDGVGEAAQIYSELVRLGARMKVVDFGGGLGIDYNGSKSGDSDLSVPYGLQEYAHVVNAIRFVCDRKSVKHPVICSESGRAIVSHHSILIFEAICLTAPATHNEPINIPFIMEGLSEDACADYWNLRDTAMRTGDGAFWFYADQWKQRCVEQFKEGTLGIEQLASVDGLCEWVLKAIGASDPVHTYNINLSVFTSIPDLWGIDQLFPIVPIHKLDQRPGARGILSDLTCDSDGKINKF.

Residue lysine 8 is modified to N6-(pyridoxal phosphate)lysine. A substrate-binding site is contributed by valine 192–tyrosine 202.

The protein belongs to the Orn/Lys/Arg decarboxylase class-II family. SpeA subfamily. The cofactor is pyridoxal 5'-phosphate. Mg(2+) serves as cofactor.

The catalysed reaction is L-arginine + H(+) = agmatine + CO2. It functions in the pathway amine and polyamine biosynthesis; agmatine biosynthesis; agmatine from L-arginine: step 1/1. The polypeptide is Arginine decarboxylase (SPE2) (Theobroma cacao (Cacao)).